We begin with the raw amino-acid sequence, 347 residues long: Large ribosomal subunit protein uL10 (347 aa).

The disordered stretch occupies residues 310–347 (ATVAAPAAEEEKKEEEPEEEEEDHAEEDGMAGLGALFG). Positions 325-338 (EPEEEEEDHAEEDG) are enriched in acidic residues.

Belongs to the universal ribosomal protein uL10 family. As to quaternary structure, part of the 50S ribosomal subunit. Forms part of the ribosomal stalk which helps the ribosome interact with GTP-bound translation factors. Forms a heptameric L10(L12)2(L12)2(L12)2 complex, where L10 forms an elongated spine to which the L12 dimers bind in a sequential fashion.

Functionally, forms part of the ribosomal stalk, playing a central role in the interaction of the ribosome with GTP-bound translation factors. This Methanosarcina mazei (strain ATCC BAA-159 / DSM 3647 / Goe1 / Go1 / JCM 11833 / OCM 88) (Methanosarcina frisia) protein is Large ribosomal subunit protein uL10.